Reading from the N-terminus, the 1353-residue chain is Protein prickle (1353 aa).

3 disordered regions span residues 130-206 (VDDG…TKRN), 266-292 (QEEE…PPLP), and 500-540 (AKYS…SAHA). The span at 147–165 (TPTATATAGRPLFPLSSSP) shows a compositional bias: low complexity. The segment covering 166–178 (RRSKKLLRSLRAH) has biased composition (basic residues). Positions 179–189 (VKGESRPEKPA) are enriched in basic and acidic residues. Residues 514 to 532 (LSPALSTPSPPSLLHHPAA) show a composition bias toward low complexity. The PET domain maps to 548–656 (MDMQRQSHSD…NVRQLMSARP (109 aa)). 3 LIM zinc-binding domains span residues 655-719 (RPCD…ETLK), 720-780 (PRCS…MFAE), and 781-843 (YCDY…GEPP). Disordered regions lie at residues 840–892 (GEPP…HQAS), 933–962 (HCRS…NMSP), and 1062–1303 (ADIM…SSSS). The span at 861-892 (TQRVRPQTRITSSHASSSPPMSPQQQQQHQAS) shows a compositional bias: low complexity. Composition is skewed to polar residues over residues 952 to 962 (RASSTSHNMSP) and 1111 to 1120 (SLNTPLSAHS). The span at 1130–1142 (SILSGASSSSPMS) shows a compositional bias: low complexity. A compositionally biased stretch (basic and acidic residues) spans 1177–1205 (GDKDRDRDRERDRDRDRDKGGDKDRESGR). Composition is skewed to basic residues over residues 1207-1220 (GPGH…RRKS) and 1228-1240 (NHHR…RSHS). Over residues 1269–1284 (ETAHKSPRQQRERERE) the composition is skewed to basic and acidic residues.

The protein belongs to the prickle / espinas / testin family. As to quaternary structure, interacts with dsh; PET and LIM domains interact with dsh DEP domain, in wing cells. Interacts with Vang in photoreceptor cells.

It is found in the cell membrane. Its function is as follows. Acts in a planar cell polarity (PCP) complex; polarization along the apical/basal axis of epithelial cells. PCP signaling in the wing disk requires the receptor fz and the cytoplasmic proteins dsh and pk. These act in a feedback loop leading to activation of the jnk cascade and subsequent polarized arrangement of hairs and bristles. Dgo and pk compete with one another for dsh binding, thereby modulating fz dsh activity and ensuring tight control over fz PCP signaling. Vang, stan and pk function together to regulate the establishment of tissue polarity in the adult eye. The sequence is that of Protein prickle from Drosophila pseudoobscura pseudoobscura (Fruit fly).